The primary structure comprises 422 residues: UDP-N-acetyl-D-glucosamine 6-dehydrogenase (422 aa).

NAD(+) contacts are provided by valine 14, aspartate 32, arginine 37, threonine 83, and threonine 118. The active-site Nucleophile is cysteine 258. Arginine 329 provides a ligand contact to NAD(+).

The protein belongs to the UDP-glucose/GDP-mannose dehydrogenase family.

It catalyses the reaction UDP-N-acetyl-alpha-D-glucosamine + 2 NAD(+) + H2O = UDP-2-acetamido-2-deoxy-alpha-D-glucuronate + 2 NADH + 3 H(+). The protein operates within bacterial outer membrane biogenesis; LPS O-antigen biosynthesis. Requires either potassium or ammonium-containing salts for activity. In terms of biological role, dehydrogenase required for the biosynthesis of the B-band O antigen of serotype O6 lipopolysaccharide. Is also required for flagellin glycosylation. Catalyzes the conversion of UDP-N-acetylglucosamine (UDP-GlcNAc) to UDP-N-acetylglucosaminuronic acid (UDP-GlcNAcA). Can also catalyze the conversion of UDP-N-acetyl-galactosamine (UDP-GalNAc) to UDP-N-acetylgalactosaminuronic acid (UDP-GalNAcA), with low efficiency. Can use NAD(+) or NADP(+), with a preference for NAD(+). The polypeptide is UDP-N-acetyl-D-glucosamine 6-dehydrogenase (Pseudomonas aeruginosa).